The chain runs to 95 residues: Aspartyl/glutamyl-tRNA(Asn/Gln) amidotransferase subunit C (95 aa).

This sequence belongs to the GatC family. Heterotrimer of A, B and C subunits.

The enzyme catalyses L-glutamyl-tRNA(Gln) + L-glutamine + ATP + H2O = L-glutaminyl-tRNA(Gln) + L-glutamate + ADP + phosphate + H(+). The catalysed reaction is L-aspartyl-tRNA(Asn) + L-glutamine + ATP + H2O = L-asparaginyl-tRNA(Asn) + L-glutamate + ADP + phosphate + 2 H(+). Allows the formation of correctly charged Asn-tRNA(Asn) or Gln-tRNA(Gln) through the transamidation of misacylated Asp-tRNA(Asn) or Glu-tRNA(Gln) in organisms which lack either or both of asparaginyl-tRNA or glutaminyl-tRNA synthetases. The reaction takes place in the presence of glutamine and ATP through an activated phospho-Asp-tRNA(Asn) or phospho-Glu-tRNA(Gln). The sequence is that of Aspartyl/glutamyl-tRNA(Asn/Gln) amidotransferase subunit C from Desulfosudis oleivorans (strain DSM 6200 / JCM 39069 / Hxd3) (Desulfococcus oleovorans).